The sequence spans 159 residues: MGTEAGSAPVVRGRGLKVHHLRPAPGAHKSKIRVGRGEGSKGKTAGRGTKGSKARKQVPARFEGGQMPLHMRLPKLKGFRNRFRVEYQVVNVATLAELFPQGGEVTKADLAARGAVRGKSPVKVLGNGDINVALHVSADAFSASAKEKIAAAGGSVTQS.

Residues 21–34 are compositionally biased toward basic residues; the sequence is LRPAPGAHKSKIRV. The tract at residues 21–55 is disordered; it reads LRPAPGAHKSKIRVGRGEGSKGKTAGRGTKGSKAR.

The protein belongs to the universal ribosomal protein uL15 family. In terms of assembly, part of the 50S ribosomal subunit.

Binds to the 23S rRNA. The protein is Large ribosomal subunit protein uL15 of Frankia casuarinae (strain DSM 45818 / CECT 9043 / HFP020203 / CcI3).